Reading from the N-terminus, the 260-residue chain is Vaa serine proteinase homolog 1 (260 aa).

An N-terminal signal peptide occupies residues 1–18 (MVLIRVLANLLVLQLSYA). Positions 19–24 (QKSSEL) are excised as a propeptide. Positions 25–251 (VIGGDECNIN…YTDWIQSIIA (227 aa)) constitute a Peptidase S1 domain. 6 disulfide bridges follow: Cys-31/Cys-165, Cys-52/Cys-68, Cys-100/Cys-258, Cys-144/Cys-212, Cys-176/Cys-191, and Cys-202/Cys-227. A glycan (N-linked (GlcNAc...) asparagine) is linked at Asn-123. The key residues for binding to FVIIIa stretch occupies residues 172–186 (DYSVCQKVYRKLPEK). Residue Asn-253 is glycosylated (N-linked (GlcNAc...) asparagine).

This sequence belongs to the peptidase S1 family. Snake venom subfamily. Post-translationally, N-glycosylated. The toxin exists in multiple glycoforms. Expressed by the venom gland.

The protein localises to the secreted. Its function is as follows. This is the first member of the serine protease family that has strong anticoagulant activity and lacks enzymatic activity. It inhibits activities of three blood coagulation complexes: (1) prothrombinase complex (composed of blood coagulation factors Va and Xa (F5 and F10)) (IC(50)=164.1 nM), (2) intrinsic tenase complex (composed of factors VIIIa and IXa (F8 and F9)), and (3) extrinsic tenase complex (composed of tissue factor and factor VIIa (F7)). The toxin also has been observed to bind prothrombin, factor FVa, non-activated and activated forms of factors FVII (F7) (FVII and FVIIa), factor FVIIIa (F8), factors FIX and FIXa (F9) and factors FX and FXa (F10). The toxin inhibits the activity of the intrinsic tenase complex mainly by competing with FIXa (F9) for binding to FVIIIa (F8). The chain is Vaa serine proteinase homolog 1 from Vipera ammodytes ammodytes (Western sand viper).